Reading from the N-terminus, the 254-residue chain is O-antigen biosynthesis glycosyltransferase WbnJ (254 aa).

It belongs to the glycosyltransferase 2 family.

It carries out the reaction an N-acetyl-alpha-D-galactosaminyl derivative + UDP-alpha-D-galactose = a beta-D-galactosyl-(1-&gt;3)-N-acetyl-alpha-D-galactosaminyl derivative + UDP + H(+). The catalysed reaction is alpha-D-GalNAc-(1-&gt;3)-alpha-D-GalNAc-di-trans,octa-cis-undecaprenyl diphosphate + UDP-alpha-D-galactose = beta-D-Gal-(1-&gt;3)-alpha-D-GalNAc-(1-&gt;3)-alpha-D-GalNAc-di-trans,octa-cis-undecaprenyl diphosphate + UDP + H(+). It participates in bacterial outer membrane biogenesis; LPS O-antigen biosynthesis. Its function is as follows. Involved in the assembly of the O-repeating unit during O-antigen biosynthesis. This is O-antigen biosynthesis glycosyltransferase WbnJ from Escherichia coli.